We begin with the raw amino-acid sequence, 411 residues long: LL-diaminopimelate aminotransferase (411 aa).

The substrate site is built by Tyr-15 and Gly-42. Residues Tyr-72, 108–109 (SK), Tyr-132, Asn-187, Tyr-218, and 246–248 (SFS) contribute to the pyridoxal 5'-phosphate site. Residues Lys-109, Tyr-132, and Asn-187 each contribute to the substrate site. N6-(pyridoxal phosphate)lysine is present on Lys-249. Arg-257 and Asn-292 together coordinate pyridoxal 5'-phosphate. 2 residues coordinate substrate: Asn-292 and Arg-388.

It belongs to the class-I pyridoxal-phosphate-dependent aminotransferase family. LL-diaminopimelate aminotransferase subfamily. As to quaternary structure, homodimer. It depends on pyridoxal 5'-phosphate as a cofactor.

The enzyme catalyses (2S,6S)-2,6-diaminopimelate + 2-oxoglutarate = (S)-2,3,4,5-tetrahydrodipicolinate + L-glutamate + H2O + H(+). Its pathway is amino-acid biosynthesis; L-lysine biosynthesis via DAP pathway; LL-2,6-diaminopimelate from (S)-tetrahydrodipicolinate (aminotransferase route): step 1/1. Involved in the synthesis of meso-diaminopimelate (m-DAP or DL-DAP), required for both lysine and peptidoglycan biosynthesis. Catalyzes the direct conversion of tetrahydrodipicolinate to LL-diaminopimelate. The sequence is that of LL-diaminopimelate aminotransferase from Cyanothece sp. (strain PCC 7425 / ATCC 29141).